A 363-amino-acid polypeptide reads, in one-letter code: Aminomethyltransferase (363 aa).

Belongs to the GcvT family. In terms of assembly, the glycine cleavage system is composed of four proteins: P, T, L and H.

It catalyses the reaction N(6)-[(R)-S(8)-aminomethyldihydrolipoyl]-L-lysyl-[protein] + (6S)-5,6,7,8-tetrahydrofolate = N(6)-[(R)-dihydrolipoyl]-L-lysyl-[protein] + (6R)-5,10-methylene-5,6,7,8-tetrahydrofolate + NH4(+). Its function is as follows. The glycine cleavage system catalyzes the degradation of glycine. The polypeptide is Aminomethyltransferase (Staphylococcus haemolyticus (strain JCSC1435)).